Here is a 314-residue protein sequence, read N- to C-terminus: Oxaloacetate tautomerase FAHD2B, mitochondrial (314 aa).

The N-terminal 84 residues, 1 to 84 (MLGSSGRRLL…ATLSVVRRAL (84 aa)), are a transit peptide targeting the mitochondrion. Mg(2+) contacts are provided by Glu-159, Glu-161, and Asp-190. Lys-203 is modified (N6-acetyllysine; alternate). Lys-203 is subject to N6-succinyllysine; alternate. Position 234 is an N6-acetyllysine (Lys-234).

The protein belongs to the FAH family. The cofactor is Mg(2+). Mn(2+) is required as a cofactor.

The protein localises to the mitochondrion. The enzyme catalyses oxaloacetate = enol-oxaloacetate. Its function is as follows. Tautomerase that converts enol-oxaloacetate, a strong inhibitor of succinate dehydrogenase, to the physiological keto form of oxaloacetate. It is thereby required to maximize aerobic respiration efficiency by preventing succinate dehydrogenase inhibition. This is Oxaloacetate tautomerase FAHD2B, mitochondrial from Bos taurus (Bovine).